Here is a 449-residue protein sequence, read N- to C-terminus: Phosphoglucosamine mutase (449 aa).

Ser-102 functions as the Phosphoserine intermediate in the catalytic mechanism. Positions 102, 241, 243, and 245 each coordinate Mg(2+). Ser-102 carries the post-translational modification Phosphoserine.

It belongs to the phosphohexose mutase family. The cofactor is Mg(2+). In terms of processing, activated by phosphorylation.

The catalysed reaction is alpha-D-glucosamine 1-phosphate = D-glucosamine 6-phosphate. Catalyzes the conversion of glucosamine-6-phosphate to glucosamine-1-phosphate. The sequence is that of Phosphoglucosamine mutase from Pseudoalteromonas translucida (strain TAC 125).